The following is a 348-amino-acid chain: MRIELLNTPADALETRFEEQIRPIRMLDFAGQQRLTDNLRVFISAAKMRGDALDHVLLSGPPGLGKTTLAHIIAAEMGSSIKATSGPLLDKAGNLAGLLTGLQKGDVLFIDEIHRMPPAVEEYLYSAMEDFRIDIMLDSGPSARAVQLRIEPFTLVGATTRSGLLTSPLRARFGINSRFDYYSADLLEKIIIRASGILGIGVDQDAAAEIAGRSRGTPRIANRLLRRARDFAQVADAPLITRSIAMTTLDCLEIDEEGLDDMDKKIMDTIVNKFSGGPVGAASLAVSVGEEQDTIEEVYEPYLIQAGYIARTPRGRVATRRALLRFSVQESRGDGPLFEFPLEDDQRQ.

The segment at 1-182 is large ATPase domain (RuvB-L); sequence MRIELLNTPA…FGINSRFDYY (182 aa). ATP is bound by residues Ile21, Arg22, Gly63, Lys66, Thr67, Thr68, 129 to 131, Arg172, Tyr182, and Arg219; that span reads EDF. Thr67 contacts Mg(2+). The interval 183–253 is small ATPAse domain (RuvB-S); that stretch reads SADLLEKIII…IAMTTLDCLE (71 aa). A head domain (RuvB-H) region spans residues 256–348; the sequence is EEGLDDMDKK…EFPLEDDQRQ (93 aa). DNA is bound by residues Arg311 and Arg316.

The protein belongs to the RuvB family. Homohexamer. Forms an RuvA(8)-RuvB(12)-Holliday junction (HJ) complex. HJ DNA is sandwiched between 2 RuvA tetramers; dsDNA enters through RuvA and exits via RuvB. An RuvB hexamer assembles on each DNA strand where it exits the tetramer. Each RuvB hexamer is contacted by two RuvA subunits (via domain III) on 2 adjacent RuvB subunits; this complex drives branch migration. In the full resolvosome a probable DNA-RuvA(4)-RuvB(12)-RuvC(2) complex forms which resolves the HJ.

The protein resides in the cytoplasm. The catalysed reaction is ATP + H2O = ADP + phosphate + H(+). Its function is as follows. The RuvA-RuvB-RuvC complex processes Holliday junction (HJ) DNA during genetic recombination and DNA repair, while the RuvA-RuvB complex plays an important role in the rescue of blocked DNA replication forks via replication fork reversal (RFR). RuvA specifically binds to HJ cruciform DNA, conferring on it an open structure. The RuvB hexamer acts as an ATP-dependent pump, pulling dsDNA into and through the RuvAB complex. RuvB forms 2 homohexamers on either side of HJ DNA bound by 1 or 2 RuvA tetramers; 4 subunits per hexamer contact DNA at a time. Coordinated motions by a converter formed by DNA-disengaged RuvB subunits stimulates ATP hydrolysis and nucleotide exchange. Immobilization of the converter enables RuvB to convert the ATP-contained energy into a lever motion, pulling 2 nucleotides of DNA out of the RuvA tetramer per ATP hydrolyzed, thus driving DNA branch migration. The RuvB motors rotate together with the DNA substrate, which together with the progressing nucleotide cycle form the mechanistic basis for DNA recombination by continuous HJ branch migration. Branch migration allows RuvC to scan DNA until it finds its consensus sequence, where it cleaves and resolves cruciform DNA. This is Holliday junction branch migration complex subunit RuvB from Chlorobium limicola (strain DSM 245 / NBRC 103803 / 6330).